The chain runs to 283 residues: MNVGLHLSIAGGLLKLKERIIKNKTEGVQIFSRSPRGGEAKPFNEKELKGFLEFKEEYKLYPLVVHVPYVMNLASPEEEMFQKSVAMIREDLYRSDQLHADFLVVHVGSHRGAGEERGLARMVEGLKILLSENFKTRILIENTAGSGNEMGYSLDHLAYIISETGHEELGICLDTCHLLAAGYDDVSPEGISAFSREFREKIGEERFCLLHVNDSKHPIGSRKDRHENLEQGYIGREGFINLLNSPFFKRVPWILETPEPGIEEDLVKLKKLREEVLKIPADR.

Positions 66, 106, 141, 174, 177, 211, 224, 226, and 256 each coordinate Zn(2+).

The protein belongs to the AP endonuclease 2 family. The cofactor is Zn(2+).

The enzyme catalyses Endonucleolytic cleavage to 5'-phosphooligonucleotide end-products.. Functionally, endonuclease IV plays a role in DNA repair. It cleaves phosphodiester bonds at apurinic or apyrimidinic (AP) sites, generating a 3'-hydroxyl group and a 5'-terminal sugar phosphate. The protein is Probable endonuclease 4 of Carboxydothermus hydrogenoformans (strain ATCC BAA-161 / DSM 6008 / Z-2901).